Here is a 141-residue protein sequence, read N- to C-terminus: Hemoglobin subunit alpha (141 aa).

The Globin domain maps to 1-141 (VLSSKDKANI…VSTVLTSKYR (141 aa)). Ser-3 carries the phosphoserine modification. An N6-succinyllysine mark is found at Lys-7 and Lys-11. Residue Lys-16 is modified to N6-acetyllysine; alternate. An N6-succinyllysine; alternate modification is found at Lys-16. Position 24 is a phosphotyrosine (Tyr-24). Lys-40 is subject to N6-succinyllysine. Residue Ser-49 is modified to Phosphoserine. Residue His-58 coordinates O2. His-87 serves as a coordination point for heme b. Position 102 is a phosphoserine (Ser-102). Thr-108 carries the post-translational modification Phosphothreonine. Ser-124 carries the post-translational modification Phosphoserine. Residues Thr-134 and Thr-137 each carry the phosphothreonine modification. Ser-138 is subject to Phosphoserine.

Belongs to the globin family. Heterotetramer of two alpha chains and two beta chains. In terms of tissue distribution, red blood cells.

Functionally, involved in oxygen transport from the lung to the various peripheral tissues. Its function is as follows. Hemopressin acts as an antagonist peptide of the cannabinoid receptor CNR1. Hemopressin-binding efficiently blocks cannabinoid receptor CNR1 and subsequent signaling. The polypeptide is Hemoglobin subunit alpha (HBA) (Vicugna pacos (Alpaca)).